The sequence spans 352 residues: Fatty acid synthase (352 aa).

A Ketosynthase family 3 (KS3) domain is found at 1-352; sequence MEDVVIAGIA…KVVLSLEHGL (352 aa). Catalysis depends on for beta-ketoacyl synthase activity residues Cys-161, His-293, and His-331.

Homodimer which monomers are arranged in a head to tail fashion.

It catalyses the reaction acetyl-CoA + n malonyl-CoA + 2n NADPH + 2n H(+) = a long-chain fatty acid + (n+1) CoA + n CO2 + 2n NADP(+).. Fatty acid synthetase catalyzes the formation of long-chain fatty acids from acetyl-CoA, malonyl-CoA and NADPH. This multifunctional protein has 7 catalytic activities as an acyl carrier protein. This is Fatty acid synthase (FASN) from Anser anser anser (Western greylag goose).